The sequence spans 418 residues: NADH-quinone oxidoreductase subunit D (418 aa).

This sequence belongs to the complex I 49 kDa subunit family. As to quaternary structure, NDH-1 is composed of 14 different subunits. Subunits NuoB, C, D, E, F, and G constitute the peripheral sector of the complex.

The protein resides in the cell inner membrane. The catalysed reaction is a quinone + NADH + 5 H(+)(in) = a quinol + NAD(+) + 4 H(+)(out). NDH-1 shuttles electrons from NADH, via FMN and iron-sulfur (Fe-S) centers, to quinones in the respiratory chain. The immediate electron acceptor for the enzyme in this species is believed to be ubiquinone. Couples the redox reaction to proton translocation (for every two electrons transferred, four hydrogen ions are translocated across the cytoplasmic membrane), and thus conserves the redox energy in a proton gradient. This chain is NADH-quinone oxidoreductase subunit D, found in Neisseria gonorrhoeae (strain ATCC 700825 / FA 1090).